The primary structure comprises 231 residues: Ribosomal RNA large subunit methyltransferase E (231 aa).

S-adenosyl-L-methionine contacts are provided by Gly76, Trp78, Asp99, Asp115, and Asp139. Lys179 acts as the Proton acceptor in catalysis.

It belongs to the class I-like SAM-binding methyltransferase superfamily. RNA methyltransferase RlmE family.

The protein localises to the cytoplasm. It catalyses the reaction uridine(2552) in 23S rRNA + S-adenosyl-L-methionine = 2'-O-methyluridine(2552) in 23S rRNA + S-adenosyl-L-homocysteine + H(+). In terms of biological role, specifically methylates the uridine in position 2552 of 23S rRNA at the 2'-O position of the ribose in the fully assembled 50S ribosomal subunit. In Bradyrhizobium sp. (strain ORS 278), this protein is Ribosomal RNA large subunit methyltransferase E.